The following is a 563-amino-acid chain: Type 2 DNA topoisomerase 6 subunit B (563 aa).

ATP contacts are provided by residues Asn46, Asp78, 99–100 (TK), 109–116 (GQQGIGIS), and Lys471.

Belongs to the TOP6B family. In terms of assembly, homodimer. Heterotetramer of two Top6A and two Top6B chains.

It catalyses the reaction ATP-dependent breakage, passage and rejoining of double-stranded DNA.. Its function is as follows. Relaxes both positive and negative superturns and exhibits a strong decatenase activity. In Thermococcus onnurineus (strain NA1), this protein is Type 2 DNA topoisomerase 6 subunit B.